The following is a 631-amino-acid chain: Peptide-N(4)-(N-acetyl-beta-glucosaminyl)asparagine amidase (631 aa).

The PUB domain occupies 34 to 97; sequence EAVRILLVLL…PSSNAYTLPT (64 aa). Ser126 carries the phosphoserine modification. Positions 246, 249, 272, and 273 each coordinate Zn(2+). The active-site Nucleophile is Cys296. Catalysis depends on residues His323 and Asp340. The PAW domain occupies 441 to 631; the sequence is ELKGRSSGSL…YPFDLQVQLH (191 aa).

The protein belongs to the transglutaminase-like superfamily. PNGase family. Requires Zn(2+) as cofactor.

Its subcellular location is the cytoplasm. It carries out the reaction Hydrolysis of an N(4)-(acetyl-beta-D-glucosaminyl)asparagine residue in which the glucosamine residue may be further glycosylated, to yield a (substituted) N-acetyl-beta-D-glucosaminylamine and a peptide containing an aspartate residue.. Specifically deglycosylates the denatured form of N-linked glycoproteins in the cytoplasm and assists their proteasome-mediated degradation. Cleaves the beta-aspartyl-glucosamine (GlcNAc) of the glycan and the amide side chain of Asn, converting Asn to Asp. Prefers proteins containing high-mannose over those bearing complex type oligosaccharides. Can recognize misfolded proteins in the endoplasmic reticulum that are exported to the cytosol to be destroyed and deglycosylate them, while it has no activity toward native proteins. Deglycosylation is a prerequisite for subsequent proteasome-mediated degradation of some, but not all, misfolded glycoproteins. This Drosophila melanogaster (Fruit fly) protein is Peptide-N(4)-(N-acetyl-beta-glucosaminyl)asparagine amidase (Pngl).